Consider the following 462-residue polypeptide: MIPVIALVGRPNVGKSTLFNRITKTQDALVADFPGLTRDRQYGHAQHENKSFIIVDTGGIGVDDIEVDTLMSRQSQVALNEANVILFLVDGRSGLTGIDQQIAQALRKLNKKVHLVVNKTDGMNEDIACADFQSLGITDVHAISASHGGGISSLLEEILEPFTTETHEATDDKAIKIAFAGRPNVGKSTLINRILGEERVVVYDMPGTTRDSISIPFTREDKQYVLIDTAGVRRKSRIDEKIEKFSVIKTLQAIKEAHVCLLLLDANEGITDQDMNLLGFIIESGKALVIAVNKWDGLEEDHKEKIKSELSRRLHFANFAKIRFISALHGSGVGGLFKDINEAYHSAIQSFSTPKLTRLLQDISAKHTPPCINGRRIKLRYAHLGGHNPPVIVIHGNQLDALPESYKRYLNNEFIKHLGLVGTPLKIEFKGGQNPFANKKNKLSQRQVNKKKRLMRWAKSKK.

EngA-type G domains are found at residues 3–166 (PVIA…TTET) and 175–348 (IKIA…HSAI). Residues 9 to 16 (GRPNVGKS), 56 to 60 (DTGGI), 118 to 121 (NKTD), 181 to 188 (GRPNVGKS), 228 to 232 (DTAGV), and 293 to 296 (NKWD) contribute to the GTP site. The region spanning 349-433 (QSFSTPKLTR…PLKIEFKGGQ (85 aa)) is the KH-like domain.

This sequence belongs to the TRAFAC class TrmE-Era-EngA-EngB-Septin-like GTPase superfamily. EngA (Der) GTPase family. Associates with the 50S ribosomal subunit.

In terms of biological role, GTPase that plays an essential role in the late steps of ribosome biogenesis. This is GTPase Der from Legionella pneumophila (strain Paris).